The following is a 153-amino-acid chain: MSALGFPKTPSDKKALEEGAVFSPRFDPAGLVTVVVTDAEDGMLLMVAHMNAQALALTLETGIAHYWSRSRNALWKKGETSGNFQHVVEMRTDCDQDALWLRVKVLGHDATCHTGRRSCFYRTVGLVDGKGTLVDDGSKPLFDAEFTYRKPSS.

Residue aspartate 93 coordinates Mg(2+). Cysteine 94 contacts Zn(2+). Aspartate 95 and aspartate 97 together coordinate Mg(2+). The Zn(2+) site is built by cysteine 112 and cysteine 119.

This sequence belongs to the PRA-CH family. In terms of assembly, homodimer. The cofactor is Mg(2+). Zn(2+) is required as a cofactor.

The protein localises to the cytoplasm. The catalysed reaction is 1-(5-phospho-beta-D-ribosyl)-5'-AMP + H2O = 1-(5-phospho-beta-D-ribosyl)-5-[(5-phospho-beta-D-ribosylamino)methylideneamino]imidazole-4-carboxamide. Its pathway is amino-acid biosynthesis; L-histidine biosynthesis; L-histidine from 5-phospho-alpha-D-ribose 1-diphosphate: step 3/9. Its function is as follows. Catalyzes the hydrolysis of the adenine ring of phosphoribosyl-AMP. The chain is Phosphoribosyl-AMP cyclohydrolase from Mesorhizobium japonicum (strain LMG 29417 / CECT 9101 / MAFF 303099) (Mesorhizobium loti (strain MAFF 303099)).